Here is a 2209-residue protein sequence, read N- to C-terminus: Genome polyprotein (2209 aa).

Glycine 2 carries the N-myristoyl glycine; by host lipid modification. Residues 2-1520 (GAQVSSQKVG…NINRAMTILQ (1519 aa)) are Cytoplasmic-facing. Residues 580-600 (GLGQMLESMIDNTVRETVGAA) are amphipathic alpha-helix. The interval 599–619 (AATSRDALPNTEASGPTHSKE) is disordered. Active-site for protease 2A activity residues include histidine 901 and aspartate 919. Zn(2+)-binding residues include cysteine 936 and cysteine 938. The active-site For protease 2A activity is the cysteine 990. 2 residues coordinate Zn(2+): cysteine 996 and histidine 998. The segment at 1128–1200 (GDSWLKKFTE…HQSCPSQEHQ (73 aa)) is membrane-binding. The interval 1128–1266 (GDSWLKKFTE…SPGTGKSVAT (139 aa)) is oligomerization. The segment at 1149 to 1153 (SNKIS) is RNA-binding. The region spanning 1232 to 1388 (EHTINNYIQF…NEYSRDGKLN (157 aa)) is the SF3 helicase domain. Residue 1256–1263 (GSPGTGKS) participates in ATP binding. The Zn(2+) site is built by cysteine 1396, cysteine 1399, cysteine 1408, and cysteine 1413. The segment at 1396–1413 (CKNCHQPANFKRCCPLVC) adopts a C4-type zinc-finger fold. Residues 1440 to 1447 (ERNRRSNI) are RNA-binding. The interval 1451–1456 (MEALFQ) is oligomerization. The stretch at 1521–1536 (AVTTFAAVAGVVYVMY) is an intramembrane region. Over 1537-2209 (KLFAGHQGAY…TLYRRWLDSF (673 aa)) the chain is Cytoplasmic. Tyrosine 1546 carries the O-(5'-phospho-RNA)-tyrosine modification. An O-UMP-tyrosine; transient modification is found at tyrosine 1546. The Peptidase C3 domain maps to 1566–1744 (GPGFDYAVAM…FAAALKRSYF (179 aa)). Catalysis depends on for protease 3C activity residues histidine 1605, glutamate 1636, and cysteine 1712. The RdRp catalytic domain occupies 1975-2090 (EKLFAFDYTG…SYPHEVDASL (116 aa)). Positions 1981 and 2076 each coordinate Mg(2+).

It belongs to the picornaviruses polyprotein family. As to quaternary structure, interacts with capsid protein VP1 and capsid protein VP3 to form heterotrimeric protomers. In terms of assembly, interacts with capsid protein VP0, and capsid protein VP3 to form heterotrimeric protomers. Five protomers subsequently associate to form pentamers which serve as building blocks for the capsid. Interacts with capsid protein VP2, capsid protein VP3 and capsid protein VP4 following cleavage of capsid protein VP0. Interacts with human PVR. Interacts with capsid protein VP1 and capsid protein VP3 in the mature capsid. As to quaternary structure, interacts with capsid protein VP0 and capsid protein VP1 to form heterotrimeric protomers. Five protomers subsequently associate to form pentamers which serve as building blocks for the capsid. Interacts with capsid protein VP4 in the mature capsid. Interacts with protein 2C; this interaction may be important for virion morphogenesis. In terms of assembly, interacts with capsid protein VP1 and capsid protein VP3. Homodimer. As to quaternary structure, homohexamer; forms a hexameric ring structure with 6-fold symmetry characteristic of AAA+ ATPases. Interacts (via N-terminus) with host RTN3 (via reticulon domain); this interaction is important for viral replication. Interacts with capsid protein VP3; this interaction may be important for virion morphogenesis. In terms of assembly, interacts with protein 3CD. Homodimer. Interacts with host GBF1. Interacts (via GOLD domain) with host ACBD3 (via GOLD domain); this interaction allows the formation of a viral protein 3A/ACBD3 heterotetramer with a 2:2 stoichiometry, which will stimulate the recruitment of host PI4KB in order to synthesize PI4P at the viral RNA replication sites. As to quaternary structure, interacts with RNA-directed RNA polymerase. In terms of assembly, interacts with protein 3AB and with RNA-directed RNA polymerase. Interacts with Viral protein genome-linked and with protein 3CD. Requires Mg(2+) as cofactor. Post-translationally, specific enzymatic cleavages in vivo by the viral proteases yield processing intermediates and the mature proteins. Myristoylation is required for the formation of pentamers during virus assembly. Further assembly of 12 pentamers and a molecule of genomic RNA generates the provirion. In terms of processing, during virion maturation, immature virions are rendered infectious following cleavage of VP0 into VP4 and VP2. This maturation seems to be an autocatalytic event triggered by the presence of RNA in the capsid and it is followed by a conformational change infectious virion. Post-translationally, myristoylation is required during RNA encapsidation and formation of the mature virus particle. VPg is uridylylated by the polymerase into VPg-pUpU. This acts as a nucleotide-peptide primer for the genomic RNA replication.

Its subcellular location is the virion. The protein localises to the host cytoplasm. It is found in the host cytoplasmic vesicle membrane. The protein resides in the host nucleus. The catalysed reaction is RNA(n) + a ribonucleoside 5'-triphosphate = RNA(n+1) + diphosphate. The enzyme catalyses Selective cleavage of Tyr-|-Gly bond in the picornavirus polyprotein.. It carries out the reaction a ribonucleoside 5'-triphosphate + H2O = a ribonucleoside 5'-diphosphate + phosphate + H(+). It catalyses the reaction Selective cleavage of Gln-|-Gly bond in the poliovirus polyprotein. In other picornavirus reactions Glu may be substituted for Gln, and Ser or Thr for Gly.. With respect to regulation, replication or transcription is subject to high level of random mutations by the nucleotide analog ribavirin. Functionally, forms an icosahedral capsid of pseudo T=3 symmetry with capsid proteins VP2 and VP3. The capsid is 300 Angstroms in diameter, composed of 60 copies of each capsid protein and enclosing the viral positive strand RNA genome. Capsid protein VP1 mainly forms the vertices of the capsid. Capsid protein VP1 interacts with host cell receptor PVR to provide virion attachment to target host epithelial cells. This attachment induces virion internalization predominantly through clathrin- and caveolin-independent endocytosis in Hela cells and through caveolin-mediated endocytosis in brain microvascular endothelial cells. Tyrosine kinases are probably involved in the entry process. Virus binding to PVR induces increased junctional permeability and rearrangement of junctional proteins. Modulation of endothelial tight junctions, as well as cytolytic infection of endothelial cells themselves, may result in loss of endothelial integrity which may help the virus to reach the CNS. After binding to its receptor, the capsid undergoes conformational changes. Capsid protein VP1 N-terminus (that contains an amphipathic alpha-helix) and capsid protein VP4 are externalized. Together, they shape a pore in the host membrane through which viral genome is translocated to host cell cytoplasm. Its function is as follows. Forms an icosahedral capsid of pseudo T=3 symmetry with capsid proteins VP1 and VP3. The capsid is 300 Angstroms in diameter, composed of 60 copies of each capsid protein and enclosing the viral positive strand RNA genome. In terms of biological role, forms an icosahedral capsid of pseudo T=3 symmetry with capsid proteins VP2 and VP1. The capsid is 300 Angstroms in diameter, composed of 60 copies of each capsid protein and enclosing the viral positive strand RNA genome. Lies on the inner surface of the capsid shell. After binding to the host receptor, the capsid undergoes conformational changes. Capsid protein VP4 is released, Capsid protein VP1 N-terminus is externalized, and together, they shape a pore in the host membrane through which the viral genome is translocated into the host cell cytoplasm. Functionally, component of immature procapsids, which is cleaved into capsid proteins VP4 and VP2 after maturation. Allows the capsid to remain inactive before the maturation step. Its function is as follows. Cysteine protease that cleaves viral polyprotein and specific host proteins. It is responsible for the autocatalytic cleavage between the P1 and P2 regions, which is the first cleavage occurring in the polyprotein. Also cleaves the host translation initiation factor EIF4G1, in order to shut down the capped cellular mRNA translation. Inhibits the host nucleus-cytoplasm protein and RNA trafficking by cleaving host members of the nuclear pores including NUP98, NUP62 and NUP153. Counteracts stress granule formation probably by antagonizing its assembly or promoting its dissassembly. Cleaves and inhibits host IFIH1/MDA5, thereby inhibiting the type-I IFN production and the establishment of the antiviral state. Cleaves and inhibits host MAVS, thereby inhibiting the type-I IFN production and the establishment of the antiviral state. In terms of biological role, plays an essential role in the virus replication cycle by acting as a viroporin. Creates a pore in the host endoplasmic reticulum and as a consequence releases Ca2+ in the cytoplasm of infected cell. In turn, high levels of cytoplasmic calcium may trigger membrane trafficking and transport of viral ER-associated proteins to viroplasms, sites of viral genome replication. Induces and associates with structural rearrangements of intracellular membranes. Displays RNA-binding, nucleotide binding and NTPase activities. May play a role in virion morphogenesis and viral RNA encapsidation by interacting with the capsid protein VP3. Functionally, localizes the viral replication complex to the surface of membranous vesicles. Together with protein 3CD binds the Cis-Active RNA Element (CRE) which is involved in RNA synthesis initiation. Acts as a cofactor to stimulate the activity of 3D polymerase, maybe through a nucleid acid chaperone activity. Its function is as follows. Localizes the viral replication complex to the surface of membranous vesicles. It inhibits host cell endoplasmic reticulum-to-Golgi apparatus transport and causes the disassembly of the Golgi complex, possibly through GBF1 interaction. This would result in depletion of MHC, trail receptors and IFN receptors at the host cell surface. Plays an essential role in viral RNA replication by recruiting ACBD3 and PI4KB at the viral replication sites, thereby allowing the formation of the rearranged membranous structures where viral replication takes place. In terms of biological role, acts as a primer for viral RNA replication and remains covalently bound to viral genomic RNA. VPg is uridylylated prior to priming replication into VPg-pUpU. The oriI viral genomic sequence may act as a template for this. The VPg-pUpU is then used as primer on the genomic RNA poly(A) by the RNA-dependent RNA polymerase to replicate the viral genome. During genome replication, the VPg-RNA linkage is removed by the host TDP2, thereby accelerating replication. During the late stage of the replication cycle, host TDP2 is excluded from sites of viral RNA synthesis and encapsidation, allowing for the generation of progeny virions. Involved in the viral replication complex and viral polypeptide maturation. It exhibits protease activity with a specificity and catalytic efficiency that is different from protease 3C. Protein 3CD binds to the 5'UTR of the viral genome. Functionally, major viral protease that mediates proteolytic processing of the polyprotein. Cleaves host EIF5B, contributing to host translation shutoff. Cleaves also host PABPC1, contributing to host translation shutoff. Cleaves host RIGI and thus contributes to the inhibition of type I interferon production. Cleaves host NLRP1, triggers host N-glycine-mediated degradation of the autoinhibitory NLRP1 N-terminal fragment. Inhibits the integrated stress response (ISR) in the infected cell by cleaving host G3BP1. Stress granule formation is thus inhibited, which allows protein synthesis and viral replication. Its function is as follows. Replicates the viral genomic RNA on the surface of intracellular membranes. May form linear arrays of subunits that propagate along a strong head-to-tail interaction called interface-I. Covalently attaches UMP to a tyrosine of VPg, which is used to prime RNA synthesis. The positive stranded RNA genome is first replicated at virus induced membranous vesicles, creating a dsRNA genomic replication form. This dsRNA is then used as template to synthesize positive stranded RNA genomes. ss(+)RNA genomes are either translated, replicated or encapsidated. This is Genome polyprotein from Homo sapiens (Human).